Consider the following 181-residue polypeptide: Peptidyl-tRNA hydrolase (181 aa).

Residue Y14 coordinates tRNA. Catalysis depends on H19, which acts as the Proton acceptor. The tRNA site is built by Y62, N64, and N108.

It belongs to the PTH family. As to quaternary structure, monomer.

It localises to the cytoplasm. The catalysed reaction is an N-acyl-L-alpha-aminoacyl-tRNA + H2O = an N-acyl-L-amino acid + a tRNA + H(+). Its function is as follows. Hydrolyzes ribosome-free peptidyl-tRNAs (with 1 or more amino acids incorporated), which drop off the ribosome during protein synthesis, or as a result of ribosome stalling. Functionally, catalyzes the release of premature peptidyl moieties from peptidyl-tRNA molecules trapped in stalled 50S ribosomal subunits, and thus maintains levels of free tRNAs and 50S ribosomes. The protein is Peptidyl-tRNA hydrolase of Campylobacter jejuni subsp. jejuni serotype O:2 (strain ATCC 700819 / NCTC 11168).